The primary structure comprises 186 residues: Ran guanine nucleotide release factor (186 aa).

The tract at residues 27–70 is interaction with RAN; sequence DLRPVPDNQEVFCHPVTDQSLIVELLELQAHVRGEAAARYHFED.

The protein belongs to the MOG1 family. Monomer. Interacts with RAN, both RAN-GTP and RAN-GDP. Competes with RCC1 for a common binding site on RAN and thereby inhibits RCC1-mediated nucleotide exchange. Forms a complex with RAN-GTP and RANBP1. Interacts with the cytoplasmic loop 2 of SCN5A. Isoform 1 and isoform 2 are ubiquitously expressed. Detected in heart and brain.

It is found in the nucleus. The protein resides in the cytoplasm. The protein localises to the perinuclear region. It localises to the cell membrane. Functionally, may regulate the intracellular trafficking of RAN. Promotes guanine nucleotide release from RAN and inhibits binding of new GTP by preventing the binding of the RAN guanine nucleotide exchange factor RCC1. Regulates the levels of GTP-bound RAN in the nucleus, and thereby plays a role in the regulation of RAN-dependent mitotic spindle dynamics. Enhances the expression of SCN5A at the cell membrane in cardiomyocytes. The chain is Ran guanine nucleotide release factor (RANGRF) from Homo sapiens (Human).